A 315-amino-acid polypeptide reads, in one-letter code: ADP/ATP translocase 4 (315 aa).

At 1-19 (MHREPPKKKAEKRLFDASS) the chain is on the mitochondrial intermembrane side. The Solcar 1 repeat unit spans residues 18–110 (SSFGKDLLAG…FAFKDKYKQL (93 aa)). A helical membrane pass occupies residues 20–49 (FGKDLLAGGVAAAVSKTAVAPIERVKLLLQ). Residues 50 to 86 (VQASSKQISPEARYKGMVDCLVRIPREQGFFSFWRGN) lie on the Mitochondrial matrix side of the membrane. Residues 87 to 111 (LANVIRYFPTQALNFAFKDKYKQLF) traverse the membrane as a helical segment. ADP-binding residues include Arg-92 and Lys-104. The Mitochondrial intermembrane segment spans residues 112 to 121 (MSGVNKEKQF). The chain crosses the membrane as a helical span at residues 122 to 142 (WRWFLANLASGGAAGATSLCV). Solcar repeat units lie at residues 123–213 (RWFL…VKGL) and 220–307 (TPFL…IKEF). Over 143–190 (VYPLDFARTRLGVDIGKGPEERQFKGLGDCIMKIAKSDGIAGLYQGFG) the chain is Mitochondrial matrix. A helical transmembrane segment spans residues 191 to 211 (VSVQGIIVYRASYFGAYDTVK). Residues 212 to 222 (GLLPKPKKTPF) are Mitochondrial intermembrane-facing. A helical transmembrane segment spans residues 223-243 (LVSFFIAQVVTTCSGILSYPF). Residues 244 to 283 (DTVRRRMMMQSGEAKRQYKGTLDCFVKIYQHEGINSFFRG) are Mitochondrial matrix-facing. Arg-247 contributes to the ADP binding site. An important for transport activity region spans residues 247-252 (RRRMMM). The Nucleotide carrier signature motif signature appears at 247 to 252 (RRRMMM). Residues 284 to 301 (AFSNVLRGTGGALVLVLY) form a helical membrane-spanning segment. At 302-315 (DKIKEFFHIDIGGR) the chain is on the mitochondrial intermembrane side.

This sequence belongs to the mitochondrial carrier (TC 2.A.29) family. In terms of assembly, monomer.

It is found in the mitochondrion inner membrane. Its subcellular location is the membrane. The protein localises to the cell projection. It localises to the cilium. The protein resides in the flagellum membrane. It catalyses the reaction ADP(in) + ATP(out) = ADP(out) + ATP(in). The catalysed reaction is dATP(out) + ADP(in) = dATP(in) + ADP(out). It carries out the reaction dADP(in) + ADP(out) = dADP(out) + ADP(in). The enzyme catalyses H(+)(in) = H(+)(out). The matrix-open state (m-state) is inhibited by the membrane-permeable bongkrekic acid (BKA). The cytoplasmic-open state (c-state) is inhibited by the membrane-impermeable toxic inhibitor carboxyatractyloside (CATR). Proton transporter activity is inhibited by ADP:ATP antiporter activity. Its function is as follows. ADP:ATP antiporter that mediates import of ADP into the mitochondrial matrix for ATP synthesis, and export of ATP out to fuel the cell. Cycles between the cytoplasmic-open state (c-state) and the matrix-open state (m-state): operates by the alternating access mechanism with a single substrate-binding site intermittently exposed to either the cytosolic (c-state) or matrix (m-state) side of the inner mitochondrial membrane. Specifically required during spermatogenesis, probably to mediate ADP:ATP exchange in spermatocytes. Large ATP supplies from mitochondria may be critical for normal progression of spermatogenesis during early stages of meiotic prophase I, including DNA double-strand break repair and chromosomal synapsis. In addition to its ADP:ATP antiporter activity, also involved in mitochondrial uncoupling and mitochondrial permeability transition pore (mPTP) activity. Plays a role in mitochondrial uncoupling by acting as a proton transporter: proton transport uncouples the proton flows via the electron transport chain and ATP synthase to reduce the efficiency of ATP production and cause mitochondrial thermogenesis. Proton transporter activity is inhibited by ADP:ATP antiporter activity, suggesting that SLC25A31/ANT4 acts as a master regulator of mitochondrial energy output by maintaining a delicate balance between ATP production (ADP:ATP antiporter activity) and thermogenesis (proton transporter activity). Proton transporter activity requires free fatty acids as cofactor, but does not transport it. Among nucleotides, may also exchange ADP for dATP and dADP. Also plays a key role in mPTP opening, a non-specific pore that enables free passage of the mitochondrial membranes to solutes of up to 1.5 kDa, and which contributes to cell death. It is however unclear if SLC25A31/ANT4 constitutes a pore-forming component of mPTP or regulates it. The chain is ADP/ATP translocase 4 from Macaca fascicularis (Crab-eating macaque).